The sequence spans 92 residues: Cell division topological specificity factor (92 aa).

The protein belongs to the MinE family.

Prevents the cell division inhibition by proteins MinC and MinD at internal division sites while permitting inhibition at polar sites. This ensures cell division at the proper site by restricting the formation of a division septum at the midpoint of the long axis of the cell. This is Cell division topological specificity factor from Gluconobacter oxydans (strain 621H) (Gluconobacter suboxydans).